Reading from the N-terminus, the 175-residue chain is ATP synthase subunit b (175 aa).

A helical transmembrane segment spans residues 19–35; the sequence is GLIFWTTVTFLIVLFIL.

The protein belongs to the ATPase B chain family. As to quaternary structure, F-type ATPases have 2 components, F(1) - the catalytic core - and F(0) - the membrane proton channel. F(1) has five subunits: alpha(3), beta(3), gamma(1), delta(1), epsilon(1). F(0) has four main subunits: a(1), b(2) and c(10-14). The alpha and beta chains form an alternating ring which encloses part of the gamma chain. F(1) is attached to F(0) by a central stalk formed by the gamma and epsilon chains, while a peripheral stalk is formed by the delta and b chains.

It localises to the cell inner membrane. F(1)F(0) ATP synthase produces ATP from ADP in the presence of a proton or sodium gradient. F-type ATPases consist of two structural domains, F(1) containing the extramembraneous catalytic core and F(0) containing the membrane proton channel, linked together by a central stalk and a peripheral stalk. During catalysis, ATP synthesis in the catalytic domain of F(1) is coupled via a rotary mechanism of the central stalk subunits to proton translocation. Its function is as follows. Component of the F(0) channel, it forms part of the peripheral stalk, linking F(1) to F(0). This Chlorobium phaeobacteroides (strain BS1) protein is ATP synthase subunit b.